Here is a 262-residue protein sequence, read N- to C-terminus: Tryptophan synthase alpha chain (262 aa).

Active-site proton acceptor residues include glutamate 48 and aspartate 59.

It belongs to the TrpA family. In terms of assembly, tetramer of two alpha and two beta chains.

It catalyses the reaction (1S,2R)-1-C-(indol-3-yl)glycerol 3-phosphate + L-serine = D-glyceraldehyde 3-phosphate + L-tryptophan + H2O. The protein operates within amino-acid biosynthesis; L-tryptophan biosynthesis; L-tryptophan from chorismate: step 5/5. The alpha subunit is responsible for the aldol cleavage of indoleglycerol phosphate to indole and glyceraldehyde 3-phosphate. This is Tryptophan synthase alpha chain from Helicobacter pylori (strain Shi470).